The primary structure comprises 868 residues: Lysosomal cholesterol signaling protein (868 aa).

Over 1–36 (MDSYFSAKNSTLAGDMNATWPASHGFNATGDPPSMS) the chain is Lumenal. Residues 1–368 (MDSYFSAKNS…SAWLLTFPTM (368 aa)) are PIN-like transporter. Residues asparagine 9, asparagine 17, and asparagine 27 are each glycosylated (N-linked (GlcNAc...) asparagine). The chain crosses the membrane as a helical span at residues 37 to 57 (ITRLFPALLECFGIVLCGYIA). Phenylalanine 41 and tyrosine 55 together coordinate cholesterol. Residues 58–77 (GRANIITSTQAKGLGNFVSR) are Cytoplasmic-facing. Residues 78–98 (FALPALLFKNMVVLNFSNVDW) traverse the membrane as a helical segment. At 99–102 (AFLY) the chain is on the lumenal side. A helical membrane pass occupies residues 103–123 (SVLIGKASVFFIVCVLTLLVA). The Cytoplasmic portion of the chain corresponds to 124-131 (SPESRFSK). Residues 132–152 (AGLFPIFATQSNDFALGYPIV) traverse the membrane as a discontinuously helical segment. At 153-165 (EALYQSTYPEYLQ) the chain is on the lumenal side. A helical membrane pass occupies residues 166–186 (YIYLVAPISLMMLNPIGFIFC). The Cytoplasmic segment spans residues 187 to 211 (EIQKSKDTQNASQNKAKIVGLGFLR). Residues 212–232 (VLQNPIVFMVFVGIAFNFILD) form a discontinuously helical membrane-spanning segment. Over 233 to 241 (KKIPVYMEN) the chain is Lumenal. The chain crosses the membrane as a discontinuously helical span at residues 242 to 262 (FLDGLANSFSGSALFYLGLTM). Topologically, residues 263–271 (VGKIRRLKK) are cytoplasmic. 3 residues coordinate cholesterol: glycine 264, lysine 265, and isoleucine 266. A helical membrane pass occupies residues 272 to 292 (SAFVVLTLLITAKLLVLPLLC). Residues 293 to 313 (REMVELLDKGDSVVNHTSLSN) lie on the Lumenal side of the membrane. An N-linked (GlcNAc...) asparagine glycan is attached at asparagine 307. A discontinuously helical transmembrane segment spans residues 314–334 (YAFLYGVFPVAPGVAIFATQF). The Cytoplasmic segment spans residues 335–344 (NMEVEIITSG). A helical membrane pass occupies residues 345–365 (MVISTFVSAPIMYVSAWLLTF). Topologically, residues 366-379 (PTMDAKPLAYAIQN) are lumenal. Residues 378 to 715 (QNVSFDISII…FGIFGLDKHL (338 aa)) form a GPCR region. Asparagine 379 carries N-linked (GlcNAc...) asparagine glycosylation. The helical transmembrane segment at 380-400 (VSFDISIISLVSLIWSLSILL) threads the bilayer. The Cytoplasmic segment spans residues 401–412 (LSKKYKQLPHML). Residues 413–433 (TANLLIAQTIVCAGMMIWNFV) form a helical membrane-spanning segment. The Lumenal portion of the chain corresponds to 434–436 (KEK). Residues 437–457 (NFVGQILVFVLLYSSLYSTYL) traverse the membrane as a helical segment. Over 458 to 478 (WTGLLAVSLFLLKKRESVQLP) the chain is Cytoplasmic. Residues 479–499 (VGIIIISGWGIPALLVGVLLI) traverse the membrane as a helical segment. At 500–518 (TGKHNGDSIDSAFFYGKEQ) the chain is on the lumenal side. A helical membrane pass occupies residues 519–539 (MITTAVTLFCSILIAGVSLMC). The Cytoplasmic portion of the chain corresponds to 540-658 (MNRTTQAGHY…GDPQLTRHVL (119 aa)). A disordered region spans residues 550 to 582 (EGFGQSQNHKPVEPGSTAFEENPAPTNEPELFP). Arginine 655 serves as a coordination point for cholesterol. The chain crosses the membrane as a helical span at residues 659 to 679 (LCLLLIIGLFANLSSCLWWLF). Over 680 to 689 (NHETGRLYVE) the chain is Lumenal. The helical transmembrane segment at 690-710 (LQFFCAVFNFGQGFISFGIFG) threads the bilayer. Over 711–868 (LDKHLIILPF…SSPPSVSPKT (158 aa)) the chain is Cytoplasmic. One can recognise a DEP domain in the interval 755–833 (YHRDLCIRNI…DEYLFYRFLQ (79 aa)). Positions 836-868 (PEQSPPARTLRDHQEESYKEIGHSSPPSVSPKT) are disordered. The segment covering 844–857 (TLRDHQEESYKEIG) has biased composition (basic and acidic residues).

Homodimer; via the transporter region and DEP domain. Interacts with the GATOR1 complex; preventing interaction between GATOR1 and KICSTOR; interaction is disrupted upon cholesterol starvation. Widely expressed in adult tissues and during development. In brain, widely distributed in forebrain regions, while it shows a more restricted distribution in the midbrain and hindbrain regions. Expressed at highest level in the lateral part of striatum and hippocampus.

Its subcellular location is the lysosome membrane. Cholesterol-binding protein that acts as a regulator of mTORC1 signaling pathway. Acts as a sensor of cholesterol to signal cholesterol sufficiency to mTORC1: in presence of cholesterol, binds cholesterol, leading to disruption of the interaction between the GATOR1 and KICSTOR complexes and promotion of mTORC1 signaling. Upon cholesterol starvation, GPR155/LYCHOS is unable to perturb the association between GATOR1 and KICSTOR, leading to mTORC1 signaling inhibition. Binds indole-3-acetic acid and may play a role in tryptophan metabolism. In Mus musculus (Mouse), this protein is Lysosomal cholesterol signaling protein.